The following is a 132-amino-acid chain: Large ribosomal subunit protein uL14 (132 aa).

It belongs to the universal ribosomal protein uL14 family. Part of the 50S ribosomal subunit. Forms a cluster with proteins L3 and L24e, part of which may contact the 16S rRNA in 2 intersubunit bridges.

Functionally, binds to 23S rRNA. Forms part of two intersubunit bridges in the 70S ribosome. This Methanococcus maripaludis (strain DSM 14266 / JCM 13030 / NBRC 101832 / S2 / LL) protein is Large ribosomal subunit protein uL14.